The sequence spans 35 residues: Dolichyl-diphosphooligosaccharide--protein glycosyltransferase subunit 4C (35 aa).

Topologically, residues 1–8 are lumenal; the sequence is MFDDQDLG. The chain crosses the membrane as a helical span at residues 9–29; it reads FFANFLGIFIFILVIAYHFVM. The Cytoplasmic segment spans residues 30–35; that stretch reads ADPKFE.

It belongs to the OST4 family. In terms of assembly, component of the oligosaccharyltransferase (OST) complex.

It is found in the endoplasmic reticulum membrane. In terms of biological role, subunit of the oligosaccharyl transferase (OST) complex that catalyzes the initial transfer of a defined glycan (Glc(3)Man(9)GlcNAc(2) in eukaryotes) from the lipid carrier dolichol-pyrophosphate to an asparagine residue within an Asn-X-Ser/Thr consensus motif in nascent polypeptide chains, the first step in protein N-glycosylation. N-glycosylation occurs cotranslationally and the complex associates with the Sec61 complex at the channel-forming translocon complex that mediates protein translocation across the endoplasmic reticulum (ER). All subunits are required for a maximal enzyme activity. In Arabidopsis thaliana (Mouse-ear cress), this protein is Dolichyl-diphosphooligosaccharide--protein glycosyltransferase subunit 4C (OST4C).